The primary structure comprises 628 residues: Growth hormone receptor (628 aa).

The N-terminal stretch at 1–18 (MDLWQLLLTLAVVGSSNA) is a signal peptide. Topologically, residues 19 to 266 (FVGREAVTVT…FTCEEEFQFP (248 aa)) are extracellular. N33, N40, and N46 each carry an N-linked (GlcNAc...) asparagine glycan. Cystine bridges form between C56–C66 and C101–C112. N115 carries an N-linked (GlcNAc...) asparagine glycan. C126 and C140 are oxidised to a cystine. In terms of domain architecture, Fibronectin type-III spans 151-254 (PPTGLNWTLM…EILYITLPQS (104 aa)). N156, N161, and N200 each carry an N-linked (GlcNAc...) asparagine glycan. Residues 240-244 (YGEFS) carry the WSXWS motif motif. A helical membrane pass occupies residues 267–287 (WFLIMIFGIFGLTVMLLVVMF). Residues 288 to 628 (SKQQRIKMLI…STDQLNKIML (341 aa)) are Cytoplasmic-facing. The required for JAK2 binding stretch occupies residues 294–379 (KMLILPPVPV…HQKSLNILGA (86 aa)). The Box 1 motif signature appears at 297–305 (ILPPVPVPK). A UbE motif motif is present at residues 340-349 (DSWVEFIELD). Position 341 is a phosphoserine (S341). Phosphotyrosine occurs at positions 483 and 585.

This sequence belongs to the type I cytokine receptor family. Type 1 subfamily. In terms of assembly, on growth hormone (GH) binding, forms homodimers and binds JAK2 via a box 1-containing domain. The soluble form (GHBP) is produced by phorbol ester-promoted proteolytic cleavage at the cell surface (shedding) by ADAM17/TACE. Shedding is inhibited by growth hormone (GH) binding to the receptor probably due to a conformational change in GHR rendering the receptor inaccessible to ADAM17. In terms of processing, on GH binding, phosphorylated on tyrosine residues in the cytoplasmic domain by JAK2. Post-translationally, ubiquitinated by the ECS(SOCS2) complex following ligand-binding and phosphorylation by JAK2, leading to its degradation by the proteasome. Regulation by the ECS(SOCS2) complex acts as a negative feedback loop of growth hormone receptor signaling. Ubiquitination is not sufficient for GHR internalization.

It is found in the cell membrane. The protein resides in the secreted. In terms of biological role, receptor for pituitary gland growth hormone (GH1) involved in regulating postnatal body growth. On ligand binding, couples to the JAK2/STAT5 pathway. Functionally, the soluble form (GHBP) acts as a reservoir of growth hormone in plasma and may be a modulator/inhibitor of GH signaling. The chain is Growth hormone receptor (GHR) from Cavia porcellus (Guinea pig).